The following is a 136-amino-acid chain: Small ribosomal subunit protein uS11 (136 aa).

The protein belongs to the universal ribosomal protein uS11 family. In terms of assembly, part of the 30S ribosomal subunit. Interacts with proteins S7 and S18. Binds to IF-3.

In terms of biological role, located on the platform of the 30S subunit, it bridges several disparate RNA helices of the 16S rRNA. Forms part of the Shine-Dalgarno cleft in the 70S ribosome. The polypeptide is Small ribosomal subunit protein uS11 (Leptospira borgpetersenii serovar Hardjo-bovis (strain JB197)).